Here is a 414-residue protein sequence, read N- to C-terminus: N-carbamoyl-L-amino-acid amidohydrolase (414 aa).

Residues His83, Asp94, Glu129, and His195 each coordinate a divalent metal cation. An N-carbamoyl-L-alpha-amino acid contacts are provided by Gln198, His231, Asn281, Arg294, and Gly363. The segment at 214-333 is involved in dimerization; it reads GIAGPSWFKV…QIEKNMAAVP (120 aa). His388 contributes to the a divalent metal cation binding site.

It belongs to the peptidase M20 family. In terms of assembly, homodimer. It depends on Mn(2+) as a cofactor. Ni(2+) serves as cofactor. The cofactor is Co(2+). Fe(2+) is required as a cofactor.

The catalysed reaction is an N-carbamoyl-L-alpha-amino acid + H2O + 2 H(+) = an L-alpha-amino acid + NH4(+) + CO2. It carries out the reaction N-carbamoyl-L-methionine + H2O + 2 H(+) = L-methionine + NH4(+) + CO2. In terms of biological role, catalyzes the hydrolysis of N-carbamoyl-L-alpha-amino acids to free L-alpha-amino acids. Is strictly L-specific since it is inactive toward N-carbamoyl-D-alpha-amino acids. This Pseudomonas sp. (strain NS671) protein is N-carbamoyl-L-amino-acid amidohydrolase.